A 612-amino-acid polypeptide reads, in one-letter code: Threonine--tRNA ligase (612 aa).

Positions 218–509 (DHRKLGVELG…LSEHFGGNFP (292 aa)) are catalytic. Zn(2+) is bound by residues Cys310, His361, and His486.

Belongs to the class-II aminoacyl-tRNA synthetase family. Homodimer. Zn(2+) serves as cofactor.

It is found in the cytoplasm. It carries out the reaction tRNA(Thr) + L-threonine + ATP = L-threonyl-tRNA(Thr) + AMP + diphosphate + H(+). In terms of biological role, catalyzes the attachment of threonine to tRNA(Thr) in a two-step reaction: L-threonine is first activated by ATP to form Thr-AMP and then transferred to the acceptor end of tRNA(Thr). Also edits incorrectly charged L-seryl-tRNA(Thr). The protein is Threonine--tRNA ligase of Helicobacter pylori (strain P12).